Consider the following 360-residue polypeptide: MRVFNFSAGPAALPEEVLRQAADEMLDWHGSGMSVMEMSHRGKEFMSIHETALADLRELLDVPASHRILFLQGGGIAENAIVPMNLLGWRKSADFVVTGSWSQKSFNEAKKYCTPHLAASGKTADGFTRAPTRAEWQLSDDPAYVHLCTNETIDGVETFEIPDLGDVPLVADVSSHILSRPMDVAKYGVLFGGAQKNIGMAGVTVVIVREDLLDRALSICPSAFEWKTVAENNSLYNTPPTYAIYIAGLVFQWLKRQGGLAAIEARNIEKAKLLYDTIDASGFYLNKVEPAVRSRMNVPFFLADETRNEDFLAGAKARGLLQLKGHKSVGGMRASIYNAVPLEGVKALVEYMKDFERRDA.

Arg41 contributes to the L-glutamate binding site. Residues Trp101, Thr152, Asp172, and Gln195 each coordinate pyridoxal 5'-phosphate. N6-(pyridoxal phosphate)lysine is present on Lys196. Residue 237 to 238 (NT) participates in pyridoxal 5'-phosphate binding.

Belongs to the class-V pyridoxal-phosphate-dependent aminotransferase family. SerC subfamily. Homodimer. Requires pyridoxal 5'-phosphate as cofactor.

It is found in the cytoplasm. The enzyme catalyses O-phospho-L-serine + 2-oxoglutarate = 3-phosphooxypyruvate + L-glutamate. It carries out the reaction 4-(phosphooxy)-L-threonine + 2-oxoglutarate = (R)-3-hydroxy-2-oxo-4-phosphooxybutanoate + L-glutamate. It participates in amino-acid biosynthesis; L-serine biosynthesis; L-serine from 3-phospho-D-glycerate: step 2/3. The protein operates within cofactor biosynthesis; pyridoxine 5'-phosphate biosynthesis; pyridoxine 5'-phosphate from D-erythrose 4-phosphate: step 3/5. Functionally, catalyzes the reversible conversion of 3-phosphohydroxypyruvate to phosphoserine and of 3-hydroxy-2-oxo-4-phosphonooxybutanoate to phosphohydroxythreonine. The chain is Phosphoserine aminotransferase from Burkholderia vietnamiensis (strain G4 / LMG 22486) (Burkholderia cepacia (strain R1808)).